The following is a 159-amino-acid chain: Ribosomal RNA large subunit methyltransferase H (159 aa).

Residues L76, G108, and 127 to 132 contribute to the S-adenosyl-L-methionine site; that span reads FGKLTM.

This sequence belongs to the RNA methyltransferase RlmH family. Homodimer.

It is found in the cytoplasm. It catalyses the reaction pseudouridine(1915) in 23S rRNA + S-adenosyl-L-methionine = N(3)-methylpseudouridine(1915) in 23S rRNA + S-adenosyl-L-homocysteine + H(+). Functionally, specifically methylates the pseudouridine at position 1915 (m3Psi1915) in 23S rRNA. The polypeptide is Ribosomal RNA large subunit methyltransferase H (Lacticaseibacillus casei (strain BL23) (Lactobacillus casei)).